A 154-amino-acid polypeptide reads, in one-letter code: Urease accessory protein UreE (154 aa).

The disordered stretch occupies residues 135-154 (YGHGRTFGHDHGHAHDHHHA).

The protein belongs to the UreE family.

It is found in the cytoplasm. Its function is as follows. Involved in urease metallocenter assembly. Binds nickel. Probably functions as a nickel donor during metallocenter assembly. In Paracoccus denitrificans (strain Pd 1222), this protein is Urease accessory protein UreE.